A 101-amino-acid polypeptide reads, in one-letter code: RNA-binding protein Hfq (101 aa).

The region spanning 9–68 (DPFLNALRRERVPVSIYLVNGIKLQGQVESFDQFVILLKNTVSQMVYKHAISTVVPSRPV) is the Sm domain. The segment at 63-101 (VPSRPVSHHSNTPSGSTNNYHGSNPSAPQQPQQDSDDAE) is disordered. Residues 70 to 86 (HHSNTPSGSTNNYHGSN) are compositionally biased toward polar residues.

The protein belongs to the Hfq family. In terms of assembly, homohexamer.

Functionally, RNA chaperone that binds small regulatory RNA (sRNAs) and mRNAs to facilitate mRNA translational regulation in response to envelope stress, environmental stress and changes in metabolite concentrations. Also binds with high specificity to tRNAs. In Yersinia pseudotuberculosis serotype O:1b (strain IP 31758), this protein is RNA-binding protein Hfq.